The primary structure comprises 143 residues: Spliceosomal protein DIB1 (143 aa).

The protein belongs to the DIM1 family. In terms of assembly, component of the 25S [U4/U6.U5] tri-snRNP.

The protein resides in the nucleus. In terms of biological role, essential role in pre-mRNA splicing. Also essential for entry into mitosis (G2/M progression) as well as for chromosome segregation during mitosis. This chain is Spliceosomal protein DIB1 (DIB1), found in Eremothecium gossypii (strain ATCC 10895 / CBS 109.51 / FGSC 9923 / NRRL Y-1056) (Yeast).